The primary structure comprises 184 residues: Adenylate kinase 2 (184 aa).

Residue 10–15 (GSGKST) participates in ATP binding. Residues 30–59 (STGEILREAISHLSELGRHAQPYMIKGELV) are NMP. AMP-binding positions include T31, R36, 57–59 (ELV), 85–88 (GYPR), and Q92. An LID region spans residues 126–132 (GRSLPDD). An ATP-binding site is contributed by R127. R140 contacts AMP. Q168 contacts ATP.

It belongs to the adenylate kinase family. Monomer.

It localises to the cytoplasm. It catalyses the reaction AMP + ATP = 2 ADP. It functions in the pathway purine metabolism; AMP biosynthesis via salvage pathway; AMP from ADP: step 1/1. Its function is as follows. Catalyzes the reversible transfer of the terminal phosphate group between ATP and AMP. Plays an important role in cellular energy homeostasis and in adenine nucleotide metabolism. The polypeptide is Adenylate kinase 2 (Nostoc sp. (strain PCC 7120 / SAG 25.82 / UTEX 2576)).